The primary structure comprises 230 residues: Probable nicotinate-nucleotide adenylyltransferase (230 aa).

The protein belongs to the NadD family.

It carries out the reaction nicotinate beta-D-ribonucleotide + ATP + H(+) = deamido-NAD(+) + diphosphate. The protein operates within cofactor biosynthesis; NAD(+) biosynthesis; deamido-NAD(+) from nicotinate D-ribonucleotide: step 1/1. In terms of biological role, catalyzes the reversible adenylation of nicotinate mononucleotide (NaMN) to nicotinic acid adenine dinucleotide (NaAD). This chain is Probable nicotinate-nucleotide adenylyltransferase, found in Pseudomonas putida (strain ATCC 47054 / DSM 6125 / CFBP 8728 / NCIMB 11950 / KT2440).